Here is a 610-residue protein sequence, read N- to C-terminus: Ubiquilin-like protein (610 aa).

One can recognise a Ubiquitin-like domain in the interval 31-105 (IRVIVKTPGN…IHVVIKSKHG (75 aa)). The UBA domain maps to 562-607 (QAPEVRFSKEMECLQAMGFVNYNANLQALIATDGDTNAAIYKLKSS).

The protein is Ubiquilin-like protein (Ubqlnl) of Mus musculus (Mouse).